Reading from the N-terminus, the 659-residue chain is Probable acyl-coenzyme A oxidase acox-1.5 (659 aa).

Residues 148–151, 156–157, and G190 each bind FAD; these read YAQT and GT. Substrate is bound by residues 284-287 and R294; that span reads KVGY. Residues R319 and 339-342 each bind FAD; that span reads QQYR. ATP-binding residues include H395 and Q403. G410 provides a ligand contact to FAD. Residue 432–433 participates in substrate binding; sequence YE. E433 (proton acceptor) is an active-site residue. E435 contacts FAD. 524 to 527 provides a ligand contact to ATP; the sequence is KAAR. The Microbody targeting signal signature appears at 657-659; the sequence is SKL.

The protein belongs to the acyl-CoA oxidase family. Homodimer. FAD is required as a cofactor.

The protein resides in the peroxisome. It participates in lipid metabolism; peroxisomal fatty acid beta-oxidation. With respect to regulation, activated by ATP. ATP binding leads to a conformational change that promotes FAD cofactor binding and enzyme activity. ATP binding likely occurs during acox-1.5 folding and/or dimer formation. Functionally, involved in the first step of peroxisomal beta-oxidation by catalyzing the desaturation of fatty acid-derived side chains. This Caenorhabditis elegans protein is Probable acyl-coenzyme A oxidase acox-1.5.